The sequence spans 801 residues: Mitochondrial intermediate peptidase (801 aa).

The transit peptide at 1–41 directs the protein to the mitochondrion; it reads MKPQLLTPLRRRPWTCRQCLQRLQRLQQQTRRSFETAASPA. The disordered stretch occupies residues 31–54; that stretch reads RRSFETAASPAPGHTQVDYIPADA. H565 provides a ligand contact to Zn(2+). E566 is an active-site residue. Positions 569 and 572 each coordinate Zn(2+).

The protein belongs to the peptidase M3 family. The cofactor is Zn(2+).

It localises to the mitochondrion matrix. The enzyme catalyses Release of an N-terminal octapeptide as second stage of processing of some proteins imported into the mitochondrion.. Functionally, cleaves proteins, imported into the mitochondrion, to their mature size. While most mitochondrial precursor proteins are processed to the mature form in one step by mitochondrial processing peptidase (MPP), the sequential cleavage by MIP of an octapeptide after initial processing by MPP is a required step for a subgroup of nuclear-encoded precursor proteins destined for the matrix or the inner membrane. The chain is Mitochondrial intermediate peptidase (oct1) from Aspergillus clavatus (strain ATCC 1007 / CBS 513.65 / DSM 816 / NCTC 3887 / NRRL 1 / QM 1276 / 107).